Consider the following 431-residue polypeptide: STE20-related kinase adapter protein alpha (431 aa).

Phosphoserine is present on residues serine 2 and serine 46. The 311-residue stretch at 69-379 folds into the Protein kinase domain; sequence YELLTVIGKG…ASTLLNHSFF (311 aa). The tract at residues 310–347 is disordered; the sequence is LTMSPSRSVANSGLSDSLTTSTPRPSNGDSPSHPYHRT. Polar residues predominate over residues 312–339; sequence MSPSRSVANSGLSDSLTTSTPRPSNGDS. 2 positions are modified to phosphothreonine; by LKB1: threonine 329 and threonine 401. Position 419 is a phosphothreonine (threonine 419).

It belongs to the protein kinase superfamily. STE Ser/Thr protein kinase family. STE20 subfamily. As to quaternary structure, component of a trimeric complex composed of STK11/LKB1, STRAD (STRADA or STRADB) and CAB39/MO25 (CAB39/MO25alpha or CAB39L/MO25beta): the complex tethers STK11/LKB1 in the cytoplasm and stimulates its catalytic activity.

It localises to the nucleus. It is found in the cytoplasm. Its function is as follows. Pseudokinase which, in complex with CAB39/MO25 (CAB39/MO25alpha or CAB39L/MO25beta), binds to and activates STK11/LKB1. Adopts a closed conformation typical of active protein kinases and binds STK11/LKB1 as a pseudosubstrate, promoting conformational change of STK11/LKB1 in an active conformation. The polypeptide is STE20-related kinase adapter protein alpha (STRADA) (Pongo abelii (Sumatran orangutan)).